Reading from the N-terminus, the 169-residue chain is Small ribosomal subunit protein uS5c (169 aa).

The S5 DRBM domain occupies Trp-17–Ile-80.

The protein belongs to the universal ribosomal protein uS5 family. In terms of assembly, part of the 30S ribosomal subunit. Contacts protein S4.

The protein localises to the plastid. The protein resides in the chloroplast. In terms of biological role, with S4 and S12 plays an important role in translational accuracy. The sequence is that of Small ribosomal subunit protein uS5c (rps5) from Guillardia theta (Cryptophyte).